Here is a 45-residue protein sequence, read N- to C-terminus: Large ribosomal subunit protein bL34 (45 aa).

Belongs to the bacterial ribosomal protein bL34 family.

The chain is Large ribosomal subunit protein bL34 from Streptomyces avermitilis (strain ATCC 31267 / DSM 46492 / JCM 5070 / NBRC 14893 / NCIMB 12804 / NRRL 8165 / MA-4680).